The primary structure comprises 159 residues: Phosphopantetheine adenylyltransferase (159 aa).

Threonine 10 is a binding site for substrate. ATP-binding positions include 10-11 (TF) and histidine 18. Substrate contacts are provided by lysine 42, methionine 74, and arginine 88. ATP contacts are provided by residues 89–91 (GLR), glutamate 99, and 124–130 (WSFISSS).

The protein belongs to the bacterial CoaD family. In terms of assembly, homohexamer. The cofactor is Mg(2+).

Its subcellular location is the cytoplasm. The catalysed reaction is (R)-4'-phosphopantetheine + ATP + H(+) = 3'-dephospho-CoA + diphosphate. The protein operates within cofactor biosynthesis; coenzyme A biosynthesis; CoA from (R)-pantothenate: step 4/5. Functionally, reversibly transfers an adenylyl group from ATP to 4'-phosphopantetheine, yielding dephospho-CoA (dPCoA) and pyrophosphate. This is Phosphopantetheine adenylyltransferase from Klebsiella pneumoniae subsp. pneumoniae (strain ATCC 700721 / MGH 78578).